Reading from the N-terminus, the 77-residue chain is Chaplin-H (77 aa).

The signal sequence occupies residues 1 to 25 (MLKKVVAAAAATGGLVLAGAGMAVA). Residues 36-76 (SPGVLSGNVVQVPVHVPVNVCGNTISVIGLLNPAFGNVCIN) form the Chaplin domain. 2 forms amyloid fibrils in vitro regions span residues 38–54 (GVLS…VPVN) and 57–72 (GNTI…AFGN). Cysteines 56 and 74 form a disulfide.

This sequence belongs to the chaplin family. Short chaplin subfamily. Homodimer; disulfide linked. About 10% of ChpH isolated from cell wall forms disulfide-bonded homodimers.

The protein localises to the cell surface. Its subcellular location is the secreted. It is found in the cell wall. The protein resides in the fimbrium. Functionally, one of 8 partially redundant surface-active proteins required for efficient formation of aerial mycelium; the short chaplins assemble into a hydrophobic, amyloidal fibrillar surface layer that envelopes and protects aerial hyphae and spores, presumably anchored to the long chaplins. Chaplins have an overlapping function with the surface-active SapB peptide; chaplins are essential on minimal medium while on rich medium both chaplins and SapB are required for efficient aerial hyphae formation. Chaplins are also involved in cell attachment to a hydrophobic surface. Forms amyloid fibrils in vitro probably composed of stacked beta-sheets. A small chaplin extract (ChpD, ChpE, ChpF, ChpG and ChpH) self-assembles into 2 different amyloids; small fibrils at the air-water interface form an amphipathic membrane that resembles spore-surface structures involved in aerial hyphae formation, and hydrophilic fibrils in solution that resemble the fibers that attach cells to a hydrophobic surface. At the air-water interface the hydrophilic surface is in contact with water (probably equivalent to the peptidoglycan layer), while the hydrophobic face is exposed to the air, making the surface of the aerial hyphae hydrophobic. A minimal chaplin strain capable of forming aerial mycelium/hyphae on minimal medium contains ChpC, ChpE and ChpH. The strain also has restored rodlet formation on the hyphae surface. A small chaplin extract applied to a chaplin-deficient strain restores aerial hyphae formation. The small chaplin extract forms an amyloid-like structure similar to that seen on the surface of cells without rodlets (rdlA-rdlB deletions), and is highly surface active, reducing surface tension from 72 to 26 mJ/m(2), which probably allows escape of hyphae from an aqueous environment into air. In Streptomyces coelicolor (strain ATCC BAA-471 / A3(2) / M145), this protein is Chaplin-H.